A 463-amino-acid polypeptide reads, in one-letter code: Glycine--tRNA ligase (463 aa).

Substrate-binding residues include arginine 100 and glutamate 175. Residues 207–209 (RNE), 217–222 (FRTREF), 291–292 (EL), and 335–338 (GADR) contribute to the ATP site. A substrate-binding site is contributed by 222 to 226 (FEQME). 331–335 (EPSVG) serves as a coordination point for substrate.

It belongs to the class-II aminoacyl-tRNA synthetase family. As to quaternary structure, homodimer.

The protein localises to the cytoplasm. The catalysed reaction is tRNA(Gly) + glycine + ATP = glycyl-tRNA(Gly) + AMP + diphosphate. Its function is as follows. Catalyzes the attachment of glycine to tRNA(Gly). This Clostridium kluyveri (strain NBRC 12016) protein is Glycine--tRNA ligase.